We begin with the raw amino-acid sequence, 318 residues long: D-alanine--D-alanine ligase (318 aa).

The ATP-grasp domain occupies 116–311 (KQVWQSLGIP…FQQLVLAILA (196 aa)). 142 to 197 (SAELGFPLIVKPAHEGSSIGMAKVNSEQELVAAWKDAAKYDSQVLVEQWIHGPEFT) contacts ATP. Residues Asp265, Glu278, and Asn280 each contribute to the Mg(2+) site.

Belongs to the D-alanine--D-alanine ligase family. The cofactor is Mg(2+). Mn(2+) is required as a cofactor.

It is found in the cytoplasm. The catalysed reaction is 2 D-alanine + ATP = D-alanyl-D-alanine + ADP + phosphate + H(+). It functions in the pathway cell wall biogenesis; peptidoglycan biosynthesis. In terms of biological role, cell wall formation. The chain is D-alanine--D-alanine ligase from Pseudomonas entomophila (strain L48).